Reading from the N-terminus, the 144-residue chain is Large ribosomal subunit protein uL15 (144 aa).

Positions 1 to 54 (MRLNTLSPAEGSKKAGKRLGRGIGSGLGKTGGRGHKGQKSRSGGGVRRGFEGGQ) are disordered. Over residues 21–31 (RGIGSGLGKTG) the composition is skewed to gly residues.

It belongs to the universal ribosomal protein uL15 family. As to quaternary structure, part of the 50S ribosomal subunit.

Functionally, binds to the 23S rRNA. This chain is Large ribosomal subunit protein uL15, found in Escherichia coli (strain K12 / MC4100 / BW2952).